The primary structure comprises 81 residues: Putative phytosulfokines 6 (81 aa).

The signal sequence occupies residues 1–20 (MKQSLCLAVLFLILSTSSSA). The propeptide occupies 21-72 (IRRGKEDQEINPLVSATSVEEDSVNKLMGMEYCGEGDEECLRRRMMTESHLD). Residues Y73 and Y75 each carry the sulfotyrosine modification. A propeptide spanning residues 78 to 81 (HHKH) is cleaved from the precursor.

Belongs to the phytosulfokine family. Sulfation is important for activity and for the binding to a putative membrane receptor. Post-translationally, PSK-beta is an enzymatic derivative of PSK-alpha. Expressed in roots, leaves, stems, flowers and siliques. Most abundant in vascular bundles and in root tips.

Its subcellular location is the secreted. Functionally, promotes plant cell differentiation, organogenesis and somatic embryogenesis as well as cell proliferation. The sequence is that of Putative phytosulfokines 6 (PSK6) from Arabidopsis thaliana (Mouse-ear cress).